The following is a 100-amino-acid chain: UPF0473 protein Csac_1599 (100 aa).

It belongs to the UPF0473 family.

This is UPF0473 protein Csac_1599 from Caldicellulosiruptor saccharolyticus (strain ATCC 43494 / DSM 8903 / Tp8T 6331).